The following is a 122-amino-acid chain: Large ribosomal subunit protein uL14 (122 aa).

The protein belongs to the universal ribosomal protein uL14 family. Part of the 50S ribosomal subunit. Forms a cluster with proteins L3 and L19. In the 70S ribosome, L14 and L19 interact and together make contacts with the 16S rRNA in bridges B5 and B8.

In terms of biological role, binds to 23S rRNA. Forms part of two intersubunit bridges in the 70S ribosome. This Syntrophobacter fumaroxidans (strain DSM 10017 / MPOB) protein is Large ribosomal subunit protein uL14.